The sequence spans 157 residues: 6,7-dimethyl-8-ribityllumazine synthase (157 aa).

Residues phenylalanine 22, 57–59 (AYE), and 81–83 (TVI) each bind 5-amino-6-(D-ribitylamino)uracil. 86-87 (GT) contacts (2S)-2-hydroxy-3-oxobutyl phosphate. Histidine 89 functions as the Proton donor in the catalytic mechanism. Phenylalanine 114 is a 5-amino-6-(D-ribitylamino)uracil binding site. Arginine 128 is a binding site for (2S)-2-hydroxy-3-oxobutyl phosphate.

The protein belongs to the DMRL synthase family. In terms of assembly, forms an icosahedral capsid composed of 60 subunits, arranged as a dodecamer of pentamers.

The catalysed reaction is (2S)-2-hydroxy-3-oxobutyl phosphate + 5-amino-6-(D-ribitylamino)uracil = 6,7-dimethyl-8-(1-D-ribityl)lumazine + phosphate + 2 H2O + H(+). The protein operates within cofactor biosynthesis; riboflavin biosynthesis; riboflavin from 2-hydroxy-3-oxobutyl phosphate and 5-amino-6-(D-ribitylamino)uracil: step 1/2. Its function is as follows. Catalyzes the formation of 6,7-dimethyl-8-ribityllumazine by condensation of 5-amino-6-(D-ribitylamino)uracil with 3,4-dihydroxy-2-butanone 4-phosphate. This is the penultimate step in the biosynthesis of riboflavin. This is 6,7-dimethyl-8-ribityllumazine synthase from Pasteurella multocida (strain Pm70).